We begin with the raw amino-acid sequence, 276 residues long: NH(3)-dependent NAD(+) synthetase (276 aa).

43 to 50 (GISGGVDS) is a binding site for ATP. Asp49 provides a ligand contact to Mg(2+). Arg146 provides a ligand contact to deamido-NAD(+). Residue Thr166 participates in ATP binding. Glu171 lines the Mg(2+) pocket. Residues Lys179 and Asp186 each contribute to the deamido-NAD(+) site. The ATP site is built by Lys195 and Thr217. 266 to 267 (HK) contacts deamido-NAD(+).

It belongs to the NAD synthetase family. Homodimer.

It catalyses the reaction deamido-NAD(+) + NH4(+) + ATP = AMP + diphosphate + NAD(+) + H(+). The protein operates within cofactor biosynthesis; NAD(+) biosynthesis; NAD(+) from deamido-NAD(+) (ammonia route): step 1/1. Its function is as follows. Catalyzes the ATP-dependent amidation of deamido-NAD to form NAD. Uses ammonia as a nitrogen source. The protein is NH(3)-dependent NAD(+) synthetase of Psychromonas ingrahamii (strain DSM 17664 / CCUG 51855 / 37).